A 417-amino-acid chain; its full sequence is Spermidine/putrescine import ATP-binding protein PotA (417 aa).

In terms of domain architecture, ABC transporter spans 5–308 (IILKDLTKVF…PANRFVAQFV (304 aa)). Residue 37 to 44 (GPSGCGKT) coordinates ATP. Residues 105 to 177 (DFNSKIKANL…TALKCKKINK (73 aa)) are insert.

The protein belongs to the ABC transporter superfamily. Spermidine/putrescine importer (TC 3.A.1.11.1) family. As to quaternary structure, the complex is composed of two ATP-binding proteins (PotA), two transmembrane proteins (PotB and PotC) and a solute-binding protein (PotD).

It is found in the cell membrane. The catalysed reaction is ATP + H2O + polyamine-[polyamine-binding protein]Side 1 = ADP + phosphate + polyamineSide 2 + [polyamine-binding protein]Side 1.. Functionally, part of the ABC transporter complex PotABCD involved in spermidine/putrescine import. Responsible for energy coupling to the transport system. The protein is Spermidine/putrescine import ATP-binding protein PotA of Onion yellows phytoplasma (strain OY-M).